An 848-amino-acid chain; its full sequence is DNA mismatch repair protein MutS (848 aa).

605–612 is an ATP binding site; the sequence is GPNMAGKS.

The protein belongs to the DNA mismatch repair MutS family.

In terms of biological role, this protein is involved in the repair of mismatches in DNA. It is possible that it carries out the mismatch recognition step. This protein has a weak ATPase activity. The protein is DNA mismatch repair protein MutS of Leptospira interrogans serogroup Icterohaemorrhagiae serovar Lai (strain 56601).